Here is a 170-residue protein sequence, read N- to C-terminus: Cathelicidin antimicrobial peptide (170 aa).

The signal sequence occupies residues 1–30 (MKTQRDSPSLGRWSLVLLLLGLVMPLAIVA). A propeptide spans 31–131 (QVLSYQEAVL…DISCDKDNRR (101 aa)) (cathelin-like domain (CLD)). Cystine bridges form between Cys86–Cys97 and Cys108–Cys125. The interval 150-162 (FKRIVQRIKDFLQ) is active core.

This sequence belongs to the cathelicidin family. In terms of assembly, monomer, homodimer or homotrimer (in vitro). Oligomerizes as tetra- or hexamer in solution (in vitro). Post-translationally, proteolytically cleaved by proteinase PRTN3 into antibacterial peptide LL-37. Proteolytically cleaved by cathepsin CTSG and neutrophil elastase ELANE. In terms of processing, resistant to proteolytic degradation in solution, and when bound to both zwitterionic (mimicking mammalian membranes) and negatively charged membranes (mimicking bacterial membranes). After secretion onto the skin surface, the CAMP gene product is processed by a serine protease-dependent mechanism into multiple novel antimicrobial peptides distinct from and shorter than cathelicidin LL-37. These peptides show enhanced antimicrobial action, acquiring the ability to kill skin pathogens such as S.aureus, E.coli and C.albicans. These peptides have lost the ability to stimulate CXCL8/IL8 release from keratinocytes. The peptides act synergistically, killing bacteria at lower concentrations when present together, and maintain activity at increased salt condition.

Its subcellular location is the secreted. The protein localises to the vesicle. Antimicrobial protein that is an integral component of the innate immune system. Binds to bacterial lipopolysaccharides (LPS). Acts via neutrophil N-formyl peptide receptors to enhance the release of CXCL2. Postsecretory processing generates multiple cathelicidin antimicrobial peptides with various lengths which act as a topical antimicrobial defense in sweat on skin. The unprocessed precursor form, cathelicidin antimicrobial peptide, inhibits the growth of Gram-negative E.coli and E.aerogenes with efficiencies comparable to that of the mature peptide LL-37 (in vitro). Functionally, antimicrobial peptide that is an integral component of the innate immune system. Binds to bacterial lipopolysaccharides (LPS). Causes membrane permeabilization by forming transmembrane pores (in vitro). Causes lysis of E.coli. Exhibits antimicrobial activity against Gram-negative bacteria such as P.aeruginosa, S.typhimurium, E.aerogenes, E.coli and P.syringae, Gram-positive bacteria such as L.monocytogenes, S.epidermidis, S.pyogenes and S.aureus, as well as vancomycin-resistant enterococci (in vitro). Exhibits antimicrobial activity against methicillin-resistant S.aureus, P.mirabilis, and C.albicans in low-salt media, but not in media containing 100 mM NaCl (in vitro). Forms chiral supramolecular assemblies with quinolone signal (PQS) molecules of P.aeruginosa, which may lead to interference of bacterial quorum signaling and perturbance of bacterial biofilm formation. May form supramolecular fiber-like assemblies on bacterial membranes. Induces cytokine and chemokine producation as well as TNF/TNFA and CSF2/GMCSF production in normal human keratinocytes. Exhibits hemolytic activity against red blood cells. In terms of biological role, exhibits antimicrobial activity against E.coli and B.megaterium (in vitro). This chain is Cathelicidin antimicrobial peptide, found in Nomascus gabriellae (Red-cheeked gibbon).